The following is a 454-amino-acid chain: Bifunctional protein GlmU (454 aa).

The pyrophosphorylase stretch occupies residues 1–226 (MALNVVILAA…AVEVEGANNR (226 aa)). UDP-N-acetyl-alpha-D-glucosamine-binding positions include 8 to 11 (LAAG), Lys-22, Gln-73, 78 to 79 (GT), 100 to 102 (YGD), Gly-137, Glu-151, Asn-166, and Asn-224. Asp-102 contacts Mg(2+). Asn-224 contacts Mg(2+). Positions 227 to 247 (VQLAQLERAYQARAAEKLMLE) are linker. Residues 248-454 (GANLRDPARI…GWARPVKKAK (207 aa)) are N-acetyltransferase. Arg-330 and Lys-348 together coordinate UDP-N-acetyl-alpha-D-glucosamine. The active-site Proton acceptor is the His-360. Residues Tyr-363 and Asn-374 each coordinate UDP-N-acetyl-alpha-D-glucosamine. Acetyl-CoA-binding positions include Ala-377, 383 to 384 (NY), Ser-402, Ala-420, and Arg-437.

This sequence in the N-terminal section; belongs to the N-acetylglucosamine-1-phosphate uridyltransferase family. The protein in the C-terminal section; belongs to the transferase hexapeptide repeat family. Homotrimer. Mg(2+) is required as a cofactor.

The protein resides in the cytoplasm. It catalyses the reaction alpha-D-glucosamine 1-phosphate + acetyl-CoA = N-acetyl-alpha-D-glucosamine 1-phosphate + CoA + H(+). It carries out the reaction N-acetyl-alpha-D-glucosamine 1-phosphate + UTP + H(+) = UDP-N-acetyl-alpha-D-glucosamine + diphosphate. It participates in nucleotide-sugar biosynthesis; UDP-N-acetyl-alpha-D-glucosamine biosynthesis; N-acetyl-alpha-D-glucosamine 1-phosphate from alpha-D-glucosamine 6-phosphate (route II): step 2/2. Its pathway is nucleotide-sugar biosynthesis; UDP-N-acetyl-alpha-D-glucosamine biosynthesis; UDP-N-acetyl-alpha-D-glucosamine from N-acetyl-alpha-D-glucosamine 1-phosphate: step 1/1. The protein operates within bacterial outer membrane biogenesis; LPS lipid A biosynthesis. Its function is as follows. Catalyzes the last two sequential reactions in the de novo biosynthetic pathway for UDP-N-acetylglucosamine (UDP-GlcNAc). The C-terminal domain catalyzes the transfer of acetyl group from acetyl coenzyme A to glucosamine-1-phosphate (GlcN-1-P) to produce N-acetylglucosamine-1-phosphate (GlcNAc-1-P), which is converted into UDP-GlcNAc by the transfer of uridine 5-monophosphate (from uridine 5-triphosphate), a reaction catalyzed by the N-terminal domain. This chain is Bifunctional protein GlmU, found in Shewanella piezotolerans (strain WP3 / JCM 13877).